The following is a 194-amino-acid chain: Small ribosomal subunit protein uS4c (194 aa).

Residues 1–29 are disordered; that stretch reads RFKKIRRLGTLPGLTSKRPRSGSDLKNPL. The S4 RNA-binding domain maps to 82-143; the sequence is MRLDNILFRL…KQRSKALIQN (62 aa).

This sequence belongs to the universal ribosomal protein uS4 family. In terms of assembly, part of the 30S ribosomal subunit. Contacts protein S5. The interaction surface between S4 and S5 is involved in control of translational fidelity.

The protein resides in the plastid. It localises to the chloroplast. Functionally, one of the primary rRNA binding proteins, it binds directly to 16S rRNA where it nucleates assembly of the body of the 30S subunit. With S5 and S12 plays an important role in translational accuracy. The protein is Small ribosomal subunit protein uS4c (rps4) of Furcraea foetida (Mauritius hemp).